We begin with the raw amino-acid sequence, 251 residues long: Ribosomal RNA small subunit methyltransferase J (251 aa).

S-adenosyl-L-methionine contacts are provided by residues 100–101, 116–117, and aspartate 170; these read RD and ER.

The protein belongs to the methyltransferase superfamily. RsmJ family.

The protein resides in the cytoplasm. The enzyme catalyses guanosine(1516) in 16S rRNA + S-adenosyl-L-methionine = N(2)-methylguanosine(1516) in 16S rRNA + S-adenosyl-L-homocysteine + H(+). Functionally, specifically methylates the guanosine in position 1516 of 16S rRNA. This chain is Ribosomal RNA small subunit methyltransferase J, found in Haemophilus ducreyi (strain 35000HP / ATCC 700724).